Here is a 363-residue protein sequence, read N- to C-terminus: MSRIYNFCAGPAMLPAAVMQKAQQELLDWNGLGVSVMEISHRSKEFIALAEQAEVNLRQLMNIPNHYHVLFMHGGGRSQFSNVVNNFLGDHGRALYLVSGQWSQSAVEEAQKLAGEAQIDALNIVTKADGLNQVTLPDLHSIKKDYRYVHYCTNETVDGIEIFDELDSPWPIVADLSSTIMSREIDVSRYGLIYAGAQKNIGPSGLSIVIVRDDMLKLASLPQSSVMDYRIAAENGSMFNTPPTFAWYLAAEVFNWLKGLGGVEVIAQVNQQKAQLLYACIDDNSFYRNGVAKQNRSQMNVTFQLADDSLDSRFLAEAERAGLVALKGHRIVGGMRASLYNAMPLEGVQALVTFMSEFATKHS.

R42 contacts L-glutamate. Pyridoxal 5'-phosphate-binding positions include 76–77, W102, T156, D175, and Q198; that span reads GR. K199 is subject to N6-(pyridoxal phosphate)lysine. 240–241 is a binding site for pyridoxal 5'-phosphate; the sequence is NT.

It belongs to the class-V pyridoxal-phosphate-dependent aminotransferase family. SerC subfamily. In terms of assembly, homodimer. Pyridoxal 5'-phosphate is required as a cofactor.

It localises to the cytoplasm. The enzyme catalyses O-phospho-L-serine + 2-oxoglutarate = 3-phosphooxypyruvate + L-glutamate. It carries out the reaction 4-(phosphooxy)-L-threonine + 2-oxoglutarate = (R)-3-hydroxy-2-oxo-4-phosphooxybutanoate + L-glutamate. It functions in the pathway amino-acid biosynthesis; L-serine biosynthesis; L-serine from 3-phospho-D-glycerate: step 2/3. Its pathway is cofactor biosynthesis; pyridoxine 5'-phosphate biosynthesis; pyridoxine 5'-phosphate from D-erythrose 4-phosphate: step 3/5. In terms of biological role, catalyzes the reversible conversion of 3-phosphohydroxypyruvate to phosphoserine and of 3-hydroxy-2-oxo-4-phosphonooxybutanoate to phosphohydroxythreonine. The chain is Phosphoserine aminotransferase from Shewanella denitrificans (strain OS217 / ATCC BAA-1090 / DSM 15013).